Consider the following 405-residue polypeptide: L-rhamnonate dehydratase (405 aa).

Substrate is bound by residues H33 and R59. Mg(2+) contacts are provided by D226, E252, and E280. Residue H329 is the Proton acceptor of the active site. E349 serves as a coordination point for substrate.

The protein belongs to the mandelate racemase/muconate lactonizing enzyme family. RhamD subfamily. As to quaternary structure, homooctamer; tetramer of dimers. It depends on Mg(2+) as a cofactor.

It carries out the reaction L-rhamnonate = 2-dehydro-3-deoxy-L-rhamnonate + H2O. Functionally, catalyzes the dehydration of L-rhamnonate to 2-keto-3-deoxy-L-rhamnonate (KDR). The sequence is that of L-rhamnonate dehydratase from Salmonella typhi.